Consider the following 446-residue polypeptide: Tubulin beta chain (446 aa).

The GTP site is built by Gln11, Glu69, Ser138, Gly142, Thr143, Gly144, Asn204, and Asn226. Glu69 is a Mg(2+) binding site. The interval 423–446 is disordered; the sequence is QQYQDAGVDEEEEEYEEEPLPEDE. Acidic residues predominate over residues 429-446; sequence GVDEEEEEYEEEPLPEDE.

Belongs to the tubulin family. As to quaternary structure, dimer of alpha and beta chains. A typical microtubule is a hollow water-filled tube with an outer diameter of 25 nm and an inner diameter of 15 nM. Alpha-beta heterodimers associate head-to-tail to form protofilaments running lengthwise along the microtubule wall with the beta-tubulin subunit facing the microtubule plus end conferring a structural polarity. Microtubules usually have 13 protofilaments but different protofilament numbers can be found in some organisms and specialized cells. Mg(2+) serves as cofactor.

The protein resides in the cytoplasm. The protein localises to the cytoskeleton. In terms of biological role, tubulin is the major constituent of microtubules, a cylinder consisting of laterally associated linear protofilaments composed of alpha- and beta-tubulin heterodimers. Microtubules grow by the addition of GTP-tubulin dimers to the microtubule end, where a stabilizing cap forms. Below the cap, tubulin dimers are in GDP-bound state, owing to GTPase activity of alpha-tubulin. This chain is Tubulin beta chain (TUBB), found in Pestalotiopsis microspora.